The primary structure comprises 308 residues: Eukaryotic translation initiation factor 3 subunit G (308 aa).

The tract at residues 1–23 (MAPVAAPSTSQPAGGKPMNWADE) is disordered. An RRM domain is found at 225-303 (PTLRVTNLSE…LILSCQWSLP (79 aa)).

This sequence belongs to the eIF-3 subunit G family. In terms of assembly, component of the eukaryotic translation initiation factor 3 (eIF-3) complex.

It localises to the cytoplasm. Its function is as follows. RNA-binding component of the eukaryotic translation initiation factor 3 (eIF-3) complex, which is involved in protein synthesis of a specialized repertoire of mRNAs and, together with other initiation factors, stimulates binding of mRNA and methionyl-tRNAi to the 40S ribosome. The eIF-3 complex specifically targets and initiates translation of a subset of mRNAs involved in cell proliferation. This subunit can bind 18S rRNA. This chain is Eukaryotic translation initiation factor 3 subunit G, found in Mycosarcoma maydis (Corn smut fungus).